The following is a 72-amino-acid chain: 3-deoxy-manno-octulosonate cytidylyltransferase (72 aa).

It belongs to the KdsB family. Homodimer.

The protein resides in the cytoplasm. It carries out the reaction 3-deoxy-alpha-D-manno-oct-2-ulosonate + CTP = CMP-3-deoxy-beta-D-manno-octulosonate + diphosphate. It participates in nucleotide-sugar biosynthesis; CMP-3-deoxy-D-manno-octulosonate biosynthesis; CMP-3-deoxy-D-manno-octulosonate from 3-deoxy-D-manno-octulosonate and CTP: step 1/1. The protein operates within bacterial outer membrane biogenesis; lipopolysaccharide biosynthesis. Functionally, activates KDO (a required 8-carbon sugar) for incorporation into bacterial lipopolysaccharide in Gram-negative bacteria. This Escherichia coli protein is 3-deoxy-manno-octulosonate cytidylyltransferase (kpsU).